A 194-amino-acid chain; its full sequence is MVKSTTRKRTTLDEWDDVWLYLLVFGCLSVLVLVLVHRKLTRQKGTWSRGLRLDHLYRYSPADPITTGGGGKTTDSRGEVECRRFLETTFRVPFPKARPAFLRNPITGNNLEIDCFNPTIGLGVEYNGKQHYAFNDFFHRNKEAAMNQQYRDELKRRMCHENGVVLIEVPYTIKLSDIGPFLYARLKNLGFIAP.

Residues 17–37 (DVWLYLLVFGCLSVLVLVLVH) form a helical membrane-spanning segment.

The protein belongs to the IIV-6 307L family.

Its subcellular location is the membrane. This is an uncharacterized protein from Invertebrate iridescent virus 3 (IIV-3).